We begin with the raw amino-acid sequence, 344 residues long: Selenide, water dikinase (344 aa).

Residue Sec-16 is part of the active site. Position 16 (Sec-16) is a non-standard amino acid, selenocysteine. ATP-binding positions include Lys-19 and 46–48 (TND). Residue Asp-49 participates in Mg(2+) binding. ATP-binding positions include Asp-66, Asp-89, and 135 to 137 (GHT). A Mg(2+)-binding site is contributed by Asp-89. Asp-223 is a Mg(2+) binding site.

It belongs to the selenophosphate synthase 1 family. Class I subfamily. In terms of assembly, homodimer. Mg(2+) serves as cofactor.

It carries out the reaction hydrogenselenide + ATP + H2O = selenophosphate + AMP + phosphate + 2 H(+). In terms of biological role, synthesizes selenophosphate from selenide and ATP. The protein is Selenide, water dikinase of Caldanaerobacter subterraneus subsp. tengcongensis (strain DSM 15242 / JCM 11007 / NBRC 100824 / MB4) (Thermoanaerobacter tengcongensis).